Reading from the N-terminus, the 1933-residue chain is WD repeat-containing protein 81 (1933 aa).

A necessary and sufficient for the interaction with SQSTM1 region spans residues 1–643 (MAQGSRRRKV…TPCESGWTRE (643 aa)). Disordered regions lie at residues 305–334 (PSED…RPGC), 663–714 (SIPG…GKIV), 1038–1057 (CAFG…SGLG), 1090–1209 (QPQE…EGKE), 1517–1544 (SLRN…SCLQ), and 1565–1590 (DSQP…SRNE). Residues 314-330 (SEEKDRTGVKSEKDGEG) are compositionally biased toward basic and acidic residues. Positions 333-610 (GCPTCQKELR…IPRLLVQPIQ (278 aa)) constitute a BEACH domain. Residues 668–693 (AGDQPGSSSSQASPGLLPFSAPSGSR) are compositionally biased toward low complexity. Polar residues-rich tracts occupy residues 1100 to 1112 (GQLS…SEAS) and 1131 to 1140 (VKSGDSSQDL). Acidic residues predominate over residues 1145-1166 (GSEEEEEEEEGCVVLEEEEQDE). WD repeat units lie at residues 1638–1677 (GHTG…DGTS), 1684–1724 (IYAQ…TLRT), 1776–1815 (LNPG…VLRG), 1818–1856 (AHEG…PTHH), and 1903–1933 (NFRG…RLLA).

Belongs to the WD repeat WDR81 family. Interacts with WDR91; involved in early to late endosome cargo transport. Interacts with BECN1; negatively regulates the PI3 kinase/PI3K activity associated with endosomal membranes. Interacts with SQSTM1; the interaction is direct and regulates the interaction of SQSTM1 with ubiquitinated proteins. Interacts with MAP1LC3C; recruits MAP1LC3C to ubiquitinated protein aggregates in the aggrephagy process.

It localises to the early endosome membrane. The protein localises to the late endosome membrane. Its subcellular location is the lysosome membrane. It is found in the cytoplasmic vesicle. The protein resides in the autophagosome membrane. It localises to the mitochondrion. The protein localises to the cytoplasm. Its subcellular location is the cytosol. In terms of biological role, functions as a negative regulator of the PI3 kinase/PI3K activity associated with endosomal membranes via BECN1, a core subunit of the PI3K complex. By modifying the phosphatidylinositol 3-phosphate/PtdInsP3 content of endosomal membranes may regulate endosome fusion, recycling, sorting and early to late endosome transport. It is for instance, required for the delivery of cargos like BST2/tetherin from early to late endosome and thereby participates indirectly to their degradation by the lysosome. May also play a role in aggrephagy, the macroautophagic degradation of ubiquitinated protein aggregates. In this process, may regulate the interaction of SQSTM1 with ubiquitinated proteins and also recruit MAP1LC3C. May also be involved in maintenance of normal mitochondrial structure and organization. In Rattus norvegicus (Rat), this protein is WD repeat-containing protein 81.